Here is a 214-residue protein sequence, read N- to C-terminus: Large ribosomal subunit protein uL3 (214 aa).

The segment covering 130–151 has biased composition (polar residues); that stretch reads FSSNRASHGNSRSHNTPGSIGQ. Positions 130–163 are disordered; sequence FSSNRASHGNSRSHNTPGSIGQAQDPGRVFPGKR. Gln-153 is modified (N5-methylglutamine).

It belongs to the universal ribosomal protein uL3 family. Part of the 50S ribosomal subunit. Forms a cluster with proteins L14 and L19. Post-translationally, methylated by PrmB.

Functionally, one of the primary rRNA binding proteins, it binds directly near the 3'-end of the 23S rRNA, where it nucleates assembly of the 50S subunit. This chain is Large ribosomal subunit protein uL3, found in Chromobacterium violaceum (strain ATCC 12472 / DSM 30191 / JCM 1249 / CCUG 213 / NBRC 12614 / NCIMB 9131 / NCTC 9757 / MK).